Reading from the N-terminus, the 301-residue chain is Probable alpha-L-glutamate ligase (301 aa).

Residues 104–287 (LQLLSRKGIG…IAGMIIEYIE (184 aa)) enclose the ATP-grasp domain. ATP is bound by residues Lys141, 178-179 (EY), Asp187, and 211-213 (RSN). Mg(2+)-binding residues include Asp248, Glu260, and Asn262. Mn(2+) is bound by residues Asp248, Glu260, and Asn262.

The protein belongs to the RimK family. Mg(2+) is required as a cofactor. It depends on Mn(2+) as a cofactor.

This is Probable alpha-L-glutamate ligase from Methanococcoides burtonii (strain DSM 6242 / NBRC 107633 / OCM 468 / ACE-M).